Consider the following 150-residue polypeptide: 3-dehydroquinate dehydratase (150 aa).

The active-site Proton acceptor is tyrosine 26. Residues asparagine 77, histidine 83, and aspartate 90 each coordinate substrate. The Proton donor role is filled by histidine 103. Substrate is bound by residues 104–105 (LS) and arginine 114.

This sequence belongs to the type-II 3-dehydroquinase family. Homododecamer.

It catalyses the reaction 3-dehydroquinate = 3-dehydroshikimate + H2O. It participates in metabolic intermediate biosynthesis; chorismate biosynthesis; chorismate from D-erythrose 4-phosphate and phosphoenolpyruvate: step 3/7. Functionally, catalyzes a trans-dehydration via an enolate intermediate. This chain is 3-dehydroquinate dehydratase, found in Sodalis glossinidius (strain morsitans).